Consider the following 670-residue polypeptide: uncharacterized protein (670 aa).

The next 10 helical transmembrane spans lie at 23–42 (YALRNTIAMCLALTVAYYLN), 47–69 (YWAMTSAAVVSFPTVGGVISKSL), 76–98 (LLGAIAALLLAGHTLNEPWFFLL), 118–140 (VAYAFQLAGYTAAIIAFPMVNIT), 153–170 (VCEVIVGILCGGMMMMIL), 381–403 (QWDAGANALTLAAISCVLYSAVA), 410–432 (SLLMRTLVLLSLFSFVVKFGLMV), 437–454 (LWQFLLFLFPLLATMQLL), 461–483 (FAALWGQLIVFMGSFIAVTNPPV), and 493–510 (NLAKIVGVALAWLAFAIL).

It belongs to the aromatic acid exporter ArAE (TC 2.A.85) family.

The protein resides in the cell membrane. This is an uncharacterized protein from Escherichia coli O157:H7.